The following is an 837-amino-acid chain: AdoMet-dependent rRNA methyltransferase SPB1 (837 aa).

Positions 58, 60, 78, 94, and 119 each coordinate S-adenosyl-L-methionine. The active-site Proton acceptor is Lys159. The stretch at Leu345–Thr390 forms a coiled coil. Disordered regions lie at residues Gln359–Leu381, Phe483–Asp529, Thr573–Glu644, and Thr779–Lys808. A compositionally biased stretch (basic and acidic residues) spans Arg372 to Leu381. Over residues Glu518–Asp529 the composition is skewed to acidic residues. Residues Ser593–Leu602 show a composition bias toward basic and acidic residues. Positions Ser603–Asp635 are enriched in acidic residues.

Belongs to the class I-like SAM-binding methyltransferase superfamily. RNA methyltransferase RlmE family. SPB1 subfamily. Component of the nucleolar and nucleoplasmic pre-60S ribosomal particle.

Its subcellular location is the nucleus. The protein resides in the nucleolus. The enzyme catalyses a ribonucleotide in rRNA + S-adenosyl-L-methionine = a 2'-O-methylribonucleotide in rRNA + S-adenosyl-L-homocysteine + H(+). Its function is as follows. Required for proper assembly of pre-ribosomal particles during the biogenesis of the 60S ribosomal subunit. The sequence is that of AdoMet-dependent rRNA methyltransferase SPB1 from Candida glabrata (strain ATCC 2001 / BCRC 20586 / JCM 3761 / NBRC 0622 / NRRL Y-65 / CBS 138) (Yeast).